Consider the following 262-residue polypeptide: Probable aminoglycoside 3'-phosphotransferase (262 aa).

Asp-187 functions as the Proton acceptor in the catalytic mechanism.

This sequence belongs to the aminoglycoside phosphotransferase family.

It catalyses the reaction kanamycin A + ATP = kanamycin 3'-phosphate + ADP + H(+). In Lactococcus lactis subsp. lactis (strain IL1403) (Streptococcus lactis), this protein is Probable aminoglycoside 3'-phosphotransferase (ymdC).